The chain runs to 1190 residues: JNK-interacting protein (1190 aa).

Residues 1–35 (MACNLSPVNEMADSITSSTPSEIVYGGPGSPDEHR) form a disordered region. The RH1 domain maps to 24–112 (VYGGPGSPDE…QTQYEREKAL (89 aa)). Residues 78 to 165 (LDLAYLERDE…TDHASRLEER (88 aa)) are a coiled coil. The tract at residues 263–364 (DEFSSDIEPS…DDTSDDGSLG (102 aa)) is disordered. Residues 277–292 (PQSSADALTSPITTKE) are compositionally biased toward polar residues. Residues 383–491 (KNALNIVKND…EESIKWTEMQ (109 aa)) are a coiled coil. Residues 456 to 542 (RKRFTRSEMQ…RASSSRGKMT (87 aa)) form the RH2 domain. The interval 775–829 (EDGVPTYCSNDMKPSPKRTRDFSISEVAPVDSSAPVKEDPLPPPANRPGGRAALP) is disordered.

The protein belongs to the JIP scaffold family. Expressed in neurons of the ventral cord, retrovesicular and preanal ganglia and nerve ring, intestinal cells, seam and hypodermal cells, body wall, head muscle and pharynx.

It is found in the cytoplasm. The protein localises to the perinuclear region. The JNK-interacting protein (JIP) group of scaffold proteins selectively mediates JNK signaling by aggregating specific components of the MAPK cascade to form a functional JNK signaling module. May function as a regulator of synaptic vesicle transport, through interactions with the JNK-signaling components and motor proteins. Binds specific components of the JNK signaling pathway namely jnk-1, jkk-1 and sek-1. Associates with components of the motor protein, kinesin-1. Pre-assembled unc-16 scaffolding complexes are then transported as a cargo of kinesin, to the required subcellular location. Regulates the retrograde transport of autophagosomes from the neurites to the cell body of AIY interneurons. The chain is JNK-interacting protein from Caenorhabditis elegans.